The primary structure comprises 464 residues: MAVTINTELDPVFLKALGYLHSKSKDSAEKLKALLDESLCKGNDSVYRPQPKEVEQPKAMLSKVKPETKASSSTPSSSILSKPLASEKVKKEAEKRTADKMKVEINDIMDIPKKPRIEKTEARSSPVTVQLSKDLPVPDLSSFEETSADDFAMEMGLACVVCRQMTVFSGNQLVECQECHNLYHQDCHRPQVTDKDVNDPRLVWYCARCTRQMKRMAQKNQKPSQKPAPSAVSAVTPVAKDPSVNKPELKSKSDSANTFLAFKRAEVKASSAVSSNPSNSGVSSSSASGLTGWAAFGAKTASAVPVSGKLGTNSQATSGKPPSLSSVQKAGTVPGLTPSKAGSVSKSGSGGSSSTIPLKPLPPLILGKTGLSRSMSSDNVSKTGLPSPNPSSSGSVSSLSSQLGSNNGSSNTAGSNVNSSNKVAVDPSMQQSGAKGPTSQESQLNAMKRLQMVKKKAAQKKLKK.

Residues 42–98 (GNDSVYRPQPKEVEQPKAMLSKVKPETKASSSTPSSSILSKPLASEKVKKEAEKRTA) form a disordered region. The segment covering 69 to 84 (KASSSTPSSSILSKPL) has biased composition (low complexity). The span at 85-98 (ASEKVKKEAEKRTA) shows a compositional bias: basic and acidic residues. The PHD-type zinc finger occupies 156 to 212 (GLACVVCRQMTVFSGNQLVECQECHNLYHQDCHRPQVTDKDVNDPRLVWYCARCTRQ). Disordered regions lie at residues 216–252 (MAQK…LKSK) and 312–445 (TNSQ…SQLN). The segment covering 227–239 (PAPSAVSAVTPVA) has biased composition (low complexity). The segment covering 312–329 (TNSQATSGKPPSLSSVQK) has biased composition (polar residues). A compositionally biased stretch (low complexity) spans 339-371 (SKAGSVSKSGSGGSSSTIPLKPLPPLILGKTGL). A compositionally biased stretch (polar residues) spans 372–382 (SRSMSSDNVSK). Residues 384–421 (GLPSPNPSSSGSVSSLSSQLGSNNGSSNTAGSNVNSSN) show a composition bias toward low complexity. Polar residues predominate over residues 428–445 (SMQQSGAKGPTSQESQLN).

It belongs to the Integrator subunit 12 family. Component of the Integrator complex, composed of core subunits INTS1, INTS2, INTS3, INTS4, INTS5, INTS6, INTS7, INTS8, INTS9/RC74, INTS10, INTS11/CPSF3L, INTS12, INTS13, INTS14 and INTS15. The core complex associates with protein phosphatase 2A subunits PPP2CA and PPP2R1A, to form the Integrator-PP2A (INTAC) complex.

The protein resides in the nucleus. In terms of biological role, component of the integrator complex, a multiprotein complex that terminates RNA polymerase II (Pol II) transcription in the promoter-proximal region of genes. The integrator complex provides a quality checkpoint during transcription elongation by driving premature transcription termination of transcripts that are unfavorably configured for transcriptional elongation: the complex terminates transcription by (1) catalyzing dephosphorylation of the C-terminal domain (CTD) of Pol II subunit POLR2A/RPB1 and SUPT5H/SPT5, (2) degrading the exiting nascent RNA transcript via endonuclease activity and (3) promoting the release of Pol II from bound DNA. The integrator complex is also involved in terminating the synthesis of non-coding Pol II transcripts, such as enhancer RNAs (eRNAs), small nuclear RNAs (snRNAs), telomerase RNAs and long non-coding RNAs (lncRNAs). In Xenopus laevis (African clawed frog), this protein is Integrator complex subunit 12 (ints12).